Consider the following 186-residue polypeptide: Ribosome-recycling factor (186 aa).

It belongs to the RRF family.

It is found in the cytoplasm. Responsible for the release of ribosomes from messenger RNA at the termination of protein biosynthesis. May increase the efficiency of translation by recycling ribosomes from one round of translation to another. The polypeptide is Ribosome-recycling factor (Chlorobaculum tepidum (strain ATCC 49652 / DSM 12025 / NBRC 103806 / TLS) (Chlorobium tepidum)).